Here is a 367-residue protein sequence, read N- to C-terminus: AA9 family lytic polysaccharide monooxygenase A (367 aa).

The signal sequence occupies residues 1 to 20; sequence MKSSTFGMLALAAAAKLVSA. A Cu(2+)-binding site is contributed by H21. The tract at residues 37–56 is disordered; that stretch reads GNSESGYIRSPPSNSPITDV. Residues C63 and C183 are joined by a disulfide bond. H102 lines the Cu(2+) pocket. Residue H169 coordinates O2. Y180 serves as a coordination point for Cu(2+). The interval 234–287 is disordered; it reads GASGSSSSPSASASASAPAATSAAPAPSSFTTIAKQPATSSTEAPSTENTSTTS. 2 stretches are compositionally biased toward low complexity: residues 235–262 and 270–287; these read ASGS…APSS and PATS…STTS. Residue N282 is glycosylated (N-linked (GlcNAc...) asparagine). One can recognise a CBM1 domain in the interval 329–365; the sequence is GAVKEWYQCGGLNYKGSTQCEEGLTCKKWNPYYYQCI.

The protein belongs to the polysaccharide monooxygenase AA9 family. Cu(2+) is required as a cofactor.

The protein localises to the secreted. The enzyme catalyses [(1-&gt;4)-beta-D-glucosyl]n+m + reduced acceptor + O2 = 4-dehydro-beta-D-glucosyl-[(1-&gt;4)-beta-D-glucosyl]n-1 + [(1-&gt;4)-beta-D-glucosyl]m + acceptor + H2O.. Lytic polysaccharide monooxygenase (LPMO) that depolymerizes crystalline and amorphous polysaccharides via the oxidation of scissile alpha- or beta-(1-4)-glycosidic bonds, yielding C4 oxidation products. Catalysis by LPMOs requires the reduction of the active-site copper from Cu(II) to Cu(I) by a reducing agent and H(2)O(2) or O(2) as a cosubstrate. Active on cellulose and cello-oligosaccharides, as well as plant cell wall-derived hemicellulosic polysaccharides. Also active on cello-oligosaccharides such as cellohexaose, cellopentaose or cellotetraose. This is AA9 family lytic polysaccharide monooxygenase A from Aspergillus oryzae (strain ATCC 42149 / RIB 40) (Yellow koji mold).